Here is a 372-residue protein sequence, read N- to C-terminus: Innexin shaking-B (372 aa).

Topologically, residues 1–21 (MLDIFRGLKNLVKVSHVKTDS) are cytoplasmic. A helical membrane pass occupies residues 22-42 (IVFRLHYSITVMILMSFSLII). Topologically, residues 43 to 110 (TTRQYVGNPI…PADKKHYKYY (68 aa)) are extracellular. Residues 111–131 (QWVCFCLFFQAILFYTPRWLW) traverse the membrane as a helical segment. Residues 132-182 (KSWEGGKIHALIMDLDIGICSEAEKKQKKKLLLDYLWENLRYHNWWAYRYY) lie on the Cytoplasmic side of the membrane. The helical transmembrane segment at 183–203 (VCELLALINVIGQMFLMNRFF) threads the bilayer. The Extracellular portion of the chain corresponds to 204–267 (DGEFITFGLK…ILPLNVVNEK (64 aa)). Residues 268–288 (IYIFLWFWFILLTFLTLLTLI) form a helical membrane-spanning segment. The Cytoplasmic portion of the chain corresponds to 289–372 (YRVVIIFSPR…PGLKGEIQDA (84 aa)).

This sequence belongs to the pannexin family. In terms of assembly, monomer (isoform Lethal). As to expression, isoform Neural is expressed in synapses of giant fibers (GF), in a large thoracic cell in location of postsynaptic target and optic lobe lamina and medulla. Isoform Lethal is expressed in embryonic mesodermal derivatives. During metamorphosis, both isoforms are dynamically expressed in pupal nervous system.

Its subcellular location is the cell membrane. The protein resides in the cell junction. It localises to the gap junction. Its function is as follows. Structural component of the gap junctions at electrical synapses in distal and mid-depth levels in the lamina. Isoform Lethal forms voltage sensitive intercellular channels through homotypic interactions. This is Innexin shaking-B (shakB) from Drosophila melanogaster (Fruit fly).